We begin with the raw amino-acid sequence, 316 residues long: Glutathione synthetase (316 aa).

In terms of domain architecture, ATP-grasp spans 125-311 (KLFTAWFPEL…ITGMLMNAIE (187 aa)). 151-207 (HQKHGDVIFKPLDGMGGASIFRLKKDDPNVGVIIETLTEHGNRFCMAQNFLPAIKEG) serves as a coordination point for ATP. Glu281 and Asn283 together coordinate Mg(2+).

Belongs to the prokaryotic GSH synthase family. Mg(2+) serves as cofactor. Mn(2+) is required as a cofactor.

It carries out the reaction gamma-L-glutamyl-L-cysteine + glycine + ATP = glutathione + ADP + phosphate + H(+). The protein operates within sulfur metabolism; glutathione biosynthesis; glutathione from L-cysteine and L-glutamate: step 2/2. This Photorhabdus laumondii subsp. laumondii (strain DSM 15139 / CIP 105565 / TT01) (Photorhabdus luminescens subsp. laumondii) protein is Glutathione synthetase.